A 342-amino-acid chain; its full sequence is Succinylglutamate desuccinylase (342 aa).

3 residues coordinate Zn(2+): His63, Glu66, and His155. Glu219 is a catalytic residue.

The protein belongs to the AspA/AstE family. Succinylglutamate desuccinylase subfamily. Zn(2+) serves as cofactor.

It carries out the reaction N-succinyl-L-glutamate + H2O = L-glutamate + succinate. Its pathway is amino-acid degradation; L-arginine degradation via AST pathway; L-glutamate and succinate from L-arginine: step 5/5. Transforms N(2)-succinylglutamate into succinate and glutamate. The sequence is that of Succinylglutamate desuccinylase from Vibrio vulnificus (strain YJ016).